An 808-amino-acid polypeptide reads, in one-letter code: Phospholipase D alpha 1 (808 aa).

The 125-residue stretch at Met1–Val125 folds into the C2 domain. Asp186 lines the Ca(2+) pocket. The PLD phosphodiesterase 1 domain occupies Thr326–Arg364. Catalysis depends on residues His331, Lys333, and Asp338. His331 serves as a coordination point for a 1,2-diacyl-sn-glycero-3-phosphate. The Ca(2+) site is built by His370 and His404. Positions 520 and 659 each coordinate a 1,2-diacyl-sn-glycero-3-phosphate. Residues Phe654–Ser681 enclose the PLD phosphodiesterase 2 domain. Catalysis depends on residues His659, Lys661, and Asp666. Ca(2+) is bound at residue Glu720.

The protein belongs to the phospholipase D family. C2-PLD subfamily. Requires Ca(2+) as cofactor.

The enzyme catalyses a 1,2-diacyl-sn-glycero-3-phosphocholine + H2O = a 1,2-diacyl-sn-glycero-3-phosphate + choline + H(+). Hydrolyzes glycerol-phospholipids at the terminal phosphodiesteric bond. Plays an important role in various cellular processes. The protein is Phospholipase D alpha 1 of Carica papaya (Papaya).